The sequence spans 701 residues: Elongation factor G (701 aa).

The 283-residue stretch at 8–290 (SLYRNIGISA…AVVELLPAPT (283 aa)) folds into the tr-type G domain. Residues 17-24 (AHIDAGKT), 88-92 (DTPGH), and 142-145 (NKMD) contribute to the GTP site.

The protein belongs to the TRAFAC class translation factor GTPase superfamily. Classic translation factor GTPase family. EF-G/EF-2 subfamily.

Its subcellular location is the cytoplasm. In terms of biological role, catalyzes the GTP-dependent ribosomal translocation step during translation elongation. During this step, the ribosome changes from the pre-translocational (PRE) to the post-translocational (POST) state as the newly formed A-site-bound peptidyl-tRNA and P-site-bound deacylated tRNA move to the P and E sites, respectively. Catalyzes the coordinated movement of the two tRNA molecules, the mRNA and conformational changes in the ribosome. The chain is Elongation factor G from Neisseria meningitidis serogroup B (strain ATCC BAA-335 / MC58).